A 224-amino-acid polypeptide reads, in one-letter code: UPF0758 protein lwe1562 (224 aa).

The MPN domain maps to 102 to 224 (VIRCPDDAVK…YISLKEKGYF (123 aa)). Zn(2+)-binding residues include H173, H175, and D186. A JAMM motif motif is present at residues 173–186 (HNHPSGDPTPSSED).

This sequence belongs to the UPF0758 family.

This is UPF0758 protein lwe1562 from Listeria welshimeri serovar 6b (strain ATCC 35897 / DSM 20650 / CCUG 15529 / CIP 8149 / NCTC 11857 / SLCC 5334 / V8).